Reading from the N-terminus, the 460-residue chain is Proline--tRNA ligase (460 aa).

Belongs to the class-II aminoacyl-tRNA synthetase family. ProS type 3 subfamily. Homodimer.

The protein localises to the cytoplasm. The catalysed reaction is tRNA(Pro) + L-proline + ATP = L-prolyl-tRNA(Pro) + AMP + diphosphate. Functionally, catalyzes the attachment of proline to tRNA(Pro) in a two-step reaction: proline is first activated by ATP to form Pro-AMP and then transferred to the acceptor end of tRNA(Pro). This is Proline--tRNA ligase from Methanococcus maripaludis (strain DSM 14266 / JCM 13030 / NBRC 101832 / S2 / LL).